We begin with the raw amino-acid sequence, 240 residues long: MIPPHIHILDFNGIYEEQRILKSLAEFVFSKKIEGIRYMVLPEKIPEIENILPSHLGVTFLGDGEFHHLTYFIIKKIKRPFVLVVFDNHLDAREEEFLTCDSWIRKALKLKHLVKVVVVGTQEQEKIHRVFYSETDPQKILKLLGRHPVYLSIDKDVLDIGITGWESGRVSLEDLLNVLRHIPLRKILGADICGEPDPLEFWKMQESEKVNLSILSALFFEKLHYVPGSEHLEGKPAHVT.

This is an uncharacterized protein from Thermotoga maritima (strain ATCC 43589 / DSM 3109 / JCM 10099 / NBRC 100826 / MSB8).